A 106-amino-acid chain; its full sequence is Small ribosomal subunit protein uS10 (106 aa).

Belongs to the universal ribosomal protein uS10 family. As to quaternary structure, part of the 30S ribosomal subunit.

Involved in the binding of tRNA to the ribosomes. The chain is Small ribosomal subunit protein uS10 from Synechococcus sp. (strain RCC307).